The following is a 375-amino-acid chain: Succinyl-diaminopimelate desuccinylase (375 aa).

His66 contributes to the Zn(2+) binding site. The active site involves Asp68. Asp99 provides a ligand contact to Zn(2+). Residue Glu133 is the Proton acceptor of the active site. Zn(2+) contacts are provided by Glu134, Glu162, and His348.

It belongs to the peptidase M20A family. DapE subfamily. As to quaternary structure, homodimer. Zn(2+) serves as cofactor. Co(2+) is required as a cofactor.

The enzyme catalyses N-succinyl-(2S,6S)-2,6-diaminopimelate + H2O = (2S,6S)-2,6-diaminopimelate + succinate. Its pathway is amino-acid biosynthesis; L-lysine biosynthesis via DAP pathway; LL-2,6-diaminopimelate from (S)-tetrahydrodipicolinate (succinylase route): step 3/3. Its function is as follows. Catalyzes the hydrolysis of N-succinyl-L,L-diaminopimelic acid (SDAP), forming succinate and LL-2,6-diaminopimelate (DAP), an intermediate involved in the bacterial biosynthesis of lysine and meso-diaminopimelic acid, an essential component of bacterial cell walls. The polypeptide is Succinyl-diaminopimelate desuccinylase (Stenotrophomonas maltophilia (strain R551-3)).